A 778-amino-acid chain; its full sequence is Subtilisin-like protease SBT5.4 (778 aa).

An N-terminal signal peptide occupies residues 1-35; it reads MSMTRRYSSTQYSNKMSLQSLSSLLLLVTLFFSPA. An Inhibitor I9 domain is found at 41–126; it reads SYIVYLGSHA…VFPNKGRKLH (86 aa). Positions 130–634 constitute a Peptidase S8 domain; sequence SWNFMLLAKN…SGHVQPNKAA (505 aa). Catalysis depends on aspartate 163, which acts as the Charge relay system. N-linked (GlcNAc...) asparagine glycosylation is present at asparagine 218. The active-site Charge relay system is the histidine 230. 2 N-linked (GlcNAc...) asparagine glycosylation sites follow: asparagine 253 and asparagine 404. The PA domain maps to 401-486; the sequence is ANGNVTDALL…KDGETLFSYL (86 aa). Catalysis depends on serine 567, which acts as the Charge relay system. Residues asparagine 657, asparagine 690, and asparagine 732 are each glycosylated (N-linked (GlcNAc...) asparagine).

Belongs to the peptidase S8 family. As to expression, expressed in the vasculature of roots and leaves, stomata, sepals, stigma, anthers and siliques.

Its subcellular location is the endoplasmic reticulum. It is found in the cell membrane. Its function is as follows. Serine protease. Has a substrate preference for the hydrophobic residues Phe and Ala and the basic residue Asp in the P1 position, and for Asp, Leu or Ala in the P1' position. Interferes with CLAVATA 3 (CLV3) signaling, but does not cleave CLV3. This Arabidopsis thaliana (Mouse-ear cress) protein is Subtilisin-like protease SBT5.4.